Here is a 437-residue protein sequence, read N- to C-terminus: Isthmin-2 (437 aa).

Residues methionine 1–serine 25 form the signal peptide. The disordered stretch occupies residues aspartate 156–tryptophan 191. A compositionally biased stretch (acidic residues) spans alanine 165 to serine 176. Residues glutamate 197 to proline 242 form the TSP type-1 domain. 3 disulfide bridges follow: cysteine 209-cysteine 236, cysteine 213-cysteine 241, and cysteine 224-cysteine 228. N-linked (GlcNAc...) asparagine glycosylation is present at asparagine 217. Asparagine 258 and asparagine 349 each carry an N-linked (GlcNAc...) asparagine glycan. The AMOP domain occupies proline 262–aspartate 425.

Belongs to the isthmin family.

The protein localises to the secreted. The polypeptide is Isthmin-2 (ism2) (Danio rerio (Zebrafish)).